A 638-amino-acid polypeptide reads, in one-letter code: DNA-directed RNA polymerase I subunit RPA1 (638 aa).

Residues 297 to 317 are compositionally biased toward acidic residues; the sequence is EYDEEDDESSGESEVREGDEE. The interval 297-321 is disordered; sequence EYDEEDDESSGESEVREGDEEQEKK.

The protein belongs to the RNA polymerase beta' chain family. In terms of assembly, each class of RNA polymerase is assembled from 9 to 14 different polypeptides. This subunit is the largest component of RNA polymerase I.

The protein resides in the nucleus. The enzyme catalyses RNA(n) + a ribonucleoside 5'-triphosphate = RNA(n+1) + diphosphate. Functionally, DNA-dependent RNA polymerase catalyzes the transcription of DNA into RNA using the four ribonucleoside triphosphates as substrates. RNA polymerase I is essentially used to transcribe ribosomal DNA units. This is DNA-directed RNA polymerase I subunit RPA1 (RPA1) from Euplotoides octocarinatus (Freshwater ciliate).